A 182-amino-acid polypeptide reads, in one-letter code: Bifunctional protein PyrR (182 aa).

The short motif at 99–111 (VVLVDDVLFTGRT) is the PRPP-binding element.

The protein belongs to the purine/pyrimidine phosphoribosyltransferase family. PyrR subfamily.

The catalysed reaction is UMP + diphosphate = 5-phospho-alpha-D-ribose 1-diphosphate + uracil. Functionally, regulates the transcription of the pyrimidine nucleotide (pyr) operon in response to exogenous pyrimidines. In terms of biological role, also displays a weak uracil phosphoribosyltransferase activity which is not physiologically significant. This chain is Bifunctional protein PyrR, found in Chloroflexus aurantiacus (strain ATCC 29366 / DSM 635 / J-10-fl).